Here is a 305-residue protein sequence, read N- to C-terminus: Spermatogenesis-associated protein 4 (305 aa).

Positions 49 to 155 constitute a Calponin-homology (CH) domain; that stretch reads SRLSRSVLRW…EEVYTLLTHR (107 aa).

In terms of tissue distribution, highly expressed in testis, the expression is observed precisely in seminiferous tubules.

The protein localises to the nucleus. Its function is as follows. May play a role in apoptosis regulation. The polypeptide is Spermatogenesis-associated protein 4 (SPATA4) (Homo sapiens (Human)).